The sequence spans 154 residues: Transcriptional repressor NrdR (154 aa).

The segment at 3 to 34 is a zinc-finger region; the sequence is CPFCGANDTKVIDSRLVAEGEQVRRRRECLAC. Residues 49–139 enclose the ATP-cone domain; that stretch reads PRLIKTDGSR…VYRRFQDLNE (91 aa).

Belongs to the NrdR family. Requires Zn(2+) as cofactor.

In terms of biological role, negatively regulates transcription of bacterial ribonucleotide reductase nrd genes and operons by binding to NrdR-boxes. In Pseudomonas fluorescens (strain ATCC BAA-477 / NRRL B-23932 / Pf-5), this protein is Transcriptional repressor NrdR.